Consider the following 480-residue polypeptide: Aspartyl/glutamyl-tRNA(Asn/Gln) amidotransferase subunit B (480 aa).

The protein belongs to the GatB/GatE family. GatB subfamily. As to quaternary structure, heterotrimer of A, B and C subunits.

The enzyme catalyses L-glutamyl-tRNA(Gln) + L-glutamine + ATP + H2O = L-glutaminyl-tRNA(Gln) + L-glutamate + ADP + phosphate + H(+). The catalysed reaction is L-aspartyl-tRNA(Asn) + L-glutamine + ATP + H2O = L-asparaginyl-tRNA(Asn) + L-glutamate + ADP + phosphate + 2 H(+). Its function is as follows. Allows the formation of correctly charged Asn-tRNA(Asn) or Gln-tRNA(Gln) through the transamidation of misacylated Asp-tRNA(Asn) or Glu-tRNA(Gln) in organisms which lack either or both of asparaginyl-tRNA or glutaminyl-tRNA synthetases. The reaction takes place in the presence of glutamine and ATP through an activated phospho-Asp-tRNA(Asn) or phospho-Glu-tRNA(Gln). The protein is Aspartyl/glutamyl-tRNA(Asn/Gln) amidotransferase subunit B of Hahella chejuensis (strain KCTC 2396).